A 136-amino-acid chain; its full sequence is Acyl carrier protein 1, chloroplastic (136 aa).

Residues 1–52 (MASVTGTSISMASFKASLAPSRVSNLRSVSLPIKGKSFAPLRMRSARFVVCC) constitute a chloroplast transit peptide. Positions 56 to 131 (PETVEKVCAI…DAADLIEKLI (76 aa)) constitute a Carrier domain. S91 carries the O-(pantetheine 4'-phosphoryl)serine modification.

It belongs to the acyl carrier protein (ACP) family. In terms of processing, 4'-phosphopantetheine is transferred from CoA to a specific serine of apo-ACP by acpS. This modification is essential for activity because fatty acids are bound in thioester linkage to the sulfhydryl of the prosthetic group.

The protein resides in the plastid. The protein localises to the chloroplast. It functions in the pathway lipid metabolism; fatty acid biosynthesis. Its function is as follows. Carrier of the growing fatty acid chain in fatty acid biosynthesis. This chain is Acyl carrier protein 1, chloroplastic (ACP1), found in Casuarina glauca (Swamp oak).